Reading from the N-terminus, the 366-residue chain is Proline-rich protein 19 (366 aa).

Disordered stretches follow at residues 1–53 (MDPR…RDPC), 102–149 (ESHT…DLPV), 256–286 (TPAH…AAWG), and 301–338 (ATPP…WSPN). The span at 18–29 (GRIRRRKTRRER) shows a compositional bias: basic residues. Polar residues-rich tracts occupy residues 104 to 113 (HTPQLPTKPS) and 256 to 265 (TPAHRGSQVQ). The span at 275–286 (SSASSPSGAAWG) shows a compositional bias: low complexity. Pro residues predominate over residues 302–326 (TPPPPPPQPWDVRPPQPLPQPPSPL).

As to quaternary structure, interacts with CNTD1. As to expression, preferentially expressed in gonads.

It localises to the nucleus. It is found in the chromosome. Functionally, promotes meiotic crossing over formation through its interaction with CNTD1 by participating in the crossover differentiation step of crossover-specific recombination intermediates. The protein is Proline-rich protein 19 of Mus musculus (Mouse).